Consider the following 131-residue polypeptide: Ribosome-binding factor A (131 aa).

Residues Q110–E131 form a disordered region. Residues E115–E131 show a composition bias toward acidic residues.

The protein belongs to the RbfA family. In terms of assembly, monomer. Binds 30S ribosomal subunits, but not 50S ribosomal subunits or 70S ribosomes.

It is found in the cytoplasm. In terms of biological role, one of several proteins that assist in the late maturation steps of the functional core of the 30S ribosomal subunit. Associates with free 30S ribosomal subunits (but not with 30S subunits that are part of 70S ribosomes or polysomes). Required for efficient processing of 16S rRNA. May interact with the 5'-terminal helix region of 16S rRNA. The polypeptide is Ribosome-binding factor A (Natranaerobius thermophilus (strain ATCC BAA-1301 / DSM 18059 / JW/NM-WN-LF)).